Here is a 140-residue protein sequence, read N- to C-terminus: Extracellular globin-1 (140 aa).

Positions 1–140 (ECDVLERFKV…YDFIASGIKP (140 aa)) constitute a Globin domain. Residues C2 and C130 are joined by a disulfide bond. H93 contacts heme b.

It belongs to the globin family. In terms of assembly, the giant hemoglobins of worms are formed of a monomeric subunit and a disulfide-bonded trimer. This subunit is monomeric.

It localises to the secreted. This Metaphire hilgendorfi (Earthworm) protein is Extracellular globin-1.